The chain runs to 1003 residues: Phosphatidylinositol 4,5-bisphosphate 5-phosphatase A (1003 aa).

Disordered stretches follow at residues 1–110 (MEGQ…AAKS) and 147–414 (AMPR…QPTC). An RSXSXX motif 1 motif is present at residues 6 to 11 (RSGSAR). The segment covering 11-24 (RPGTRTGLGPLPGT) has biased composition (low complexity). Arginine 56 is subject to Asymmetric dimethylarginine; alternate. Arginine 56 carries the omega-N-methylarginine; alternate modification. Arginine 65 is subject to Omega-N-methylarginine. Arginine 76 is subject to Asymmetric dimethylarginine. Arginine 83 carries the asymmetric dimethylarginine; alternate modification. Arginine 83 is modified (omega-N-methylarginine; alternate). Over residues 160-174 (LTPTSRDQKQLSPTS) the composition is skewed to polar residues. Serine 171 carries the phosphoserine modification. Residues 180–196 (ALATSGLSLALASQEQP) are compositionally biased toward low complexity. The segment covering 197 to 210 (PQSPSSPSPVPSPV) has biased composition (pro residues). Basic and acidic residues predominate over residues 284–294 (ARPEAPRHSPE). 2 positions are modified to phosphoserine: serine 292 and serine 325. Pro residues predominate over residues 338–348 (VPPPLPKPPRS). Positions 346 to 351 (PRSPSR) match the SH3-binding motif. Low complexity-rich tracts occupy residues 349-361 (PSRS…NRSP) and 390-413 (QAQE…AQPT). Residues 351-356 (RSPSRS) carry the RSXSXX motif 2 motif. Residues 422 to 725 (ITVVTWNVGT…SDHKPVAAQF (304 aa)) form a catalytic region. The interval 726-837 (ILQFAFRDDV…IGVTEPFQIS (112 aa)) is required for ruffle localization. A disordered region spans residues 839–1003 (PTSESASSST…LGLEEGGLGP (165 aa)). The segment covering 840–855 (TSESASSSTDSSGTSS) has biased composition (low complexity). 2 consecutive short sequence motifs (RSXSXX motif) follow at residues 871-876 (RSPSPG) and 882-887 (RSRSPG). Serine 900 carries the post-translational modification Phosphoserine. Low complexity-rich tracts occupy residues 907-919 (SRSP…QLPR) and 927-943 (SSSS…GLPG). Residues 908–913 (RSPSPQ) carry the RSXSXX motif 5 motif. Phosphoserine is present on serine 987.

It belongs to the inositol 1,4,5-trisphosphate 5-phosphatase type II family.

It is found in the cytoplasm. It carries out the reaction 1D-myo-inositol 1,4,5-trisphosphate + H2O = 1D-myo-inositol 1,4-bisphosphate + phosphate. It catalyses the reaction 1D-myo-inositol 1,3,4,5-tetrakisphosphate + H2O = 1D-myo-inositol 1,3,4-trisphosphate + phosphate. The enzyme catalyses a 1,2-diacyl-sn-glycero-3-phospho-(1D-myo-inositol-4,5-bisphosphate) + H2O = a 1,2-diacyl-sn-glycero-3-phospho-(1D-myo-inositol 4-phosphate) + phosphate. Its function is as follows. Inositol 5-phosphatase, which converts inositol 1,4,5-trisphosphate to inositol 1,4-bisphosphate. Also converts phosphatidylinositol 4,5-bisphosphate to phosphatidylinositol 4-phosphate and inositol 1,3,4,5-tetrakisphosphate to inositol 1,3,4-trisphosphate in vitro. May be involved in modulation of the function of inositol and phosphatidylinositol polyphosphate-binding proteins that are present at membranes ruffles. The chain is Phosphatidylinositol 4,5-bisphosphate 5-phosphatase A (Inpp5j) from Mus musculus (Mouse).